Here is a 288-residue protein sequence, read N- to C-terminus: Aquaporin PIP1-5 (288 aa).

Positions 1–36 (MEGKEEDVRLGANRYSERQPIGTAAQGTEEKDYKEP) are disordered. Helical transmembrane passes span 57–77 (IAEF…VMGV) and 92–114 (IAWS…SGGH). Positions 116–118 (NPA) match the NPA 1 motif. The next 3 helical transmembrane spans lie at 135–155 (LFYM…VKGF), 177–197 (GDGL…VFSA), and 211–231 (ILAP…TIPI). Residues 237–239 (NPA) carry the NPA 2 motif. The chain crosses the membrane as a helical span at residues 259–279 (IFWVGPFIGAALAAIYHVVII).

It belongs to the MIP/aquaporin (TC 1.A.8) family. PIP (TC 1.A.8.11) subfamily. In terms of tissue distribution, highly expressed in roots and at lower levels in anthers and silks.

The protein resides in the cell membrane. Its function is as follows. Water channel required to facilitate the transport of water across cell membrane. This Zea mays (Maize) protein is Aquaporin PIP1-5 (PIP1-5).